An 87-amino-acid chain; its full sequence is MANLSTLITIALLLCATMLTCSARPEPAYFASFTTSPADTLSLEMIESKLHEVAGESCDKEDDEDCLVRRTLTAHLDYIYTHKNNHH.

Residues 1–23 form the signal peptide; the sequence is MANLSTLITIALLLCATMLTCSA. Positions 24 to 77 are excised as a propeptide; sequence RPEPAYFASFTTSPADTLSLEMIESKLHEVAGESCDKEDDEDCLVRRTLTAHLD. Residues Y78 and Y80 each carry the sulfotyrosine modification. The propeptide occupies 83-87; the sequence is KNNHH.

It belongs to the phytosulfokine family. Post-translationally, sulfation is important for activity and for the binding to a putative membrane receptor.

The protein localises to the secreted. Functionally, promotes plant cell differentiation, organogenesis and somatic embryogenesis as well as cell proliferation. This Arabidopsis thaliana (Mouse-ear cress) protein is Putative phytosulfokines 4 (PSK4).